The primary structure comprises 356 residues: Peptide chain release factor 1 (356 aa).

N5-methylglutamine is present on glutamine 235.

The protein belongs to the prokaryotic/mitochondrial release factor family. Methylated by PrmC. Methylation increases the termination efficiency of RF1.

Its subcellular location is the cytoplasm. In terms of biological role, peptide chain release factor 1 directs the termination of translation in response to the peptide chain termination codons UAG and UAA. This is Peptide chain release factor 1 from Hydrogenobaculum sp. (strain Y04AAS1).